A 508-amino-acid polypeptide reads, in one-letter code: Ankyrin repeat domain-containing protein 34B (508 aa).

4 ANK repeats span residues 9–38 (TDGN…YINE), 42–79 (RGET…DPNI), 83–113 (SGKS…DLSL), and 117–146 (SGYS…AKGK). The tract at residues 157 to 185 (PSGRHTTQHHLNMPPADMDGSHPPATPSE) is disordered. At Ser-260 the chain carries Phosphoserine. Thr-269 is modified (phosphothreonine). A Phosphoserine modification is found at Ser-293. Residues 361–370 (GANHYSSDSQ) are compositionally biased toward polar residues. The disordered stretch occupies residues 361-380 (GANHYSSDSQLAEGVTPPTV).

This sequence belongs to the ANKRD34 family. Post-translationally, phosphorylated. In terms of tissue distribution, specifically and constitutively expressed in brain (at protein level).

It is found in the cytoplasm. It localises to the nucleus. This chain is Ankyrin repeat domain-containing protein 34B (Ankrd34b), found in Mus musculus (Mouse).